A 451-amino-acid chain; its full sequence is Multidrug export protein MepA (451 aa).

Helical transmembrane passes span 26–46 (MIGT…IGFL), 54–74 (AISL…LFGV), 97–117 (SFSI…ALPF), 139–159 (LKVM…EQFA), 170–190 (IGML…IFGF), 194–214 (VVGA…FFII), 245–265 (IPAF…NLFL), 282–302 (LVQF…PLIA), 318–338 (AVIM…FTIG), 355–375 (ATFI…GFLF), 397–417 (VVII…GVIW), and 418–438 (SLLI…YLLR).

This sequence belongs to the multi antimicrobial extrusion (MATE) (TC 2.A.66.1) family. MepA subfamily.

The protein localises to the cell membrane. In terms of biological role, multidrug resistance efflux protein. The sequence is that of Multidrug export protein MepA (mepA) from Staphylococcus aureus (strain MRSA252).